Consider the following 374-residue polypeptide: tRNA-specific 2-thiouridylase MnmA (374 aa).

ATP-binding positions include 12-19 (GMSGGVDS) and Met38. Residues 98–100 (NPD) are interaction with target base in tRNA. The active-site Nucleophile is Cys103. Cys103 and Cys200 are joined by a disulfide. Gly127 is an ATP binding site. Residues 150 to 152 (KDQ) form an interaction with tRNA region. Catalysis depends on Cys200, which acts as the Cysteine persulfide intermediate. The tract at residues 311–312 (RY) is interaction with tRNA.

It belongs to the MnmA/TRMU family.

The protein localises to the cytoplasm. It carries out the reaction S-sulfanyl-L-cysteinyl-[protein] + uridine(34) in tRNA + AH2 + ATP = 2-thiouridine(34) in tRNA + L-cysteinyl-[protein] + A + AMP + diphosphate + H(+). Its function is as follows. Catalyzes the 2-thiolation of uridine at the wobble position (U34) of tRNA, leading to the formation of s(2)U34. The polypeptide is tRNA-specific 2-thiouridylase MnmA (Lactiplantibacillus plantarum (strain ATCC BAA-793 / NCIMB 8826 / WCFS1) (Lactobacillus plantarum)).